Here is a 476-residue protein sequence, read N- to C-terminus: PTS system N-acetylmuramic acid-specific EIIBC component (476 aa).

A PTS EIIB type-1 domain is found at 1-89; that stretch reads MATIDNAMIH…KASLGDNMSS (89 aa). C28 acts as the Phosphocysteine intermediate; for EIIB activity in catalysis. The region spanning 116-476 is the PTS EIIC type-1 domain; it reads AKFATIFTPL…FFATKDVDLS (361 aa). The next 10 helical transmembrane spans lie at 118 to 138, 160 to 180, 186 to 206, 220 to 240, 265 to 285, 304 to 324, 337 to 357, 371 to 391, 396 to 416, and 443 to 463; these read FATI…LLGL, LIAY…ILIG, AFGG…LGYN, FFGL…AAIV, TLLI…VYLF, VLAG…FVPV, LFPV…ALYF, GAII…VTLP, FITA…IAYL, and VLPA…TGFI.

It localises to the cell inner membrane. The enzyme catalyses N-acetyl-beta-D-muramate(out) + N(pros)-phospho-L-histidyl-[protein] = N-acetyl-beta-D-muramate 6-phosphate(in) + L-histidyl-[protein]. In terms of biological role, the phosphoenolpyruvate-dependent sugar phosphotransferase system (sugar PTS), a major carbohydrate active transport system, catalyzes the phosphorylation of incoming sugar substrates concomitantly with their translocation across the cell membrane. This system is involved in N-acetylmuramic acid (MurNAc) transport, yielding cytoplasmic MurNAc-6-P. Is also able to take up anhydro-N-acetylmuramic acid (anhMurNAc), but cannot phosphorylate the carbon 6, probably because of the 1,6-anhydro ring. The chain is PTS system N-acetylmuramic acid-specific EIIBC component (murP) from Pasteurella multocida (strain Pm70).